The following is a 228-amino-acid chain: MDIERVEQVRAVERLAHRRGLALMPRAGLAAADFVAARLPAGAQVLALAGPGNNGGDVLVAATLLQARGYRVAVVMPAGPARLPDDARRAWQDWCAAGGQASADLPAHAPALVIDGLFGIGLARPLGGAWQGLIDQVNAWRVPVLALDVPSGLSAASGQPLGDPPGRPVRATWTLSFIGVPAALRAPGAAAWCGEQYLSLLGLTPAFLAEAVGPCGQATATAARRSGP.

The YjeF N-terminal domain occupies 9 to 209; sequence VRAVERLAHR…LLGLTPAFLA (201 aa). Residue 53–57 participates in (6S)-NADPHX binding; it reads NNGGD. Residues asparagine 54 and aspartate 115 each coordinate K(+). (6S)-NADPHX is bound by residues 119–125 and aspartate 148; that span reads GIGLARP. Serine 151 lines the K(+) pocket.

It belongs to the NnrE/AIBP family. Requires K(+) as cofactor.

It carries out the reaction (6R)-NADHX = (6S)-NADHX. The enzyme catalyses (6R)-NADPHX = (6S)-NADPHX. In terms of biological role, catalyzes the epimerization of the S- and R-forms of NAD(P)HX, a damaged form of NAD(P)H that is a result of enzymatic or heat-dependent hydration. This is a prerequisite for the S-specific NAD(P)H-hydrate dehydratase to allow the repair of both epimers of NAD(P)HX. The sequence is that of NAD(P)H-hydrate epimerase from Bordetella parapertussis (strain 12822 / ATCC BAA-587 / NCTC 13253).